A 366-amino-acid chain; its full sequence is Histidinol-phosphate aminotransferase (366 aa).

K228 is subject to N6-(pyridoxal phosphate)lysine.

It belongs to the class-II pyridoxal-phosphate-dependent aminotransferase family. Histidinol-phosphate aminotransferase subfamily. Homodimer. It depends on pyridoxal 5'-phosphate as a cofactor.

The enzyme catalyses L-histidinol phosphate + 2-oxoglutarate = 3-(imidazol-4-yl)-2-oxopropyl phosphate + L-glutamate. It participates in amino-acid biosynthesis; L-histidine biosynthesis; L-histidine from 5-phospho-alpha-D-ribose 1-diphosphate: step 7/9. This chain is Histidinol-phosphate aminotransferase, found in Corynebacterium diphtheriae (strain ATCC 700971 / NCTC 13129 / Biotype gravis).